Here is a 139-residue protein sequence, read N- to C-terminus: Translation initiation factor 2 subunit beta (139 aa).

This sequence belongs to the eIF-2-beta/eIF-5 family. Heterotrimer composed of an alpha, a beta and a gamma chain.

Its function is as follows. eIF-2 functions in the early steps of protein synthesis by forming a ternary complex with GTP and initiator tRNA. In Saccharolobus islandicus (strain Y.N.15.51 / Yellowstone #2) (Sulfolobus islandicus), this protein is Translation initiation factor 2 subunit beta.